Here is a 359-residue protein sequence, read N- to C-terminus: 4-galactosyl-N-acetylglucosaminide 3-alpha-L-fucosyltransferase 9 (359 aa).

At 1 to 11 (MTSTSKGILRP) the chain is on the cytoplasmic side. A helical; Signal-anchor for type II membrane protein membrane pass occupies residues 12–32 (FLIVCVILACFMACLLIYIKP). The Lumenal portion of the chain corresponds to 33–359 (TNSWVFSPME…VGNLEKWFWN (327 aa)). N62 is a glycosylation site (N-linked (GlcNAc...) asparagine). An acceptor-binding region spans residues 63 to 168 (ETTILVWVWP…RRDSDIQVPY (106 aa)). Q75 serves as a coordination point for a beta-D-galactosyl-(1-&gt;4)-N-acetyl-beta-D-glucosaminyl derivative. Intrachain disulfides connect C82/C335, C91/C338, and C190/C238. N-linked (GlcNAc...) asparagine glycosylation occurs at N101. A beta-D-galactosyl-(1-&gt;4)-N-acetyl-beta-D-glucosaminyl derivative is bound at residue E137. E137 serves as the catalytic Nucleophile. E137 contributes to the GDP-beta-L-fucose binding site. N-linked (GlcNAc...) asparagine glycosylation occurs at N153. The GDP-beta-L-fucose site is built by Y168, V192, S194, N195, R202, V226, Y241, N246, Y252, E255, and K256. Residues 169 to 326 (GFLTVSTNPF…NWRKDFTVNL (158 aa)) form a donor-binding region. The acceptor-binding stretch occupies residues 327–359 (PRFWESHACLACDHVKRHQEYKSVGNLEKWFWN).

This sequence belongs to the glycosyltransferase 10 family. Homodimer. Post-translationally, N-glycosylated with complex-type N-glycans.

It is found in the golgi apparatus. The protein resides in the trans-Golgi network membrane. It localises to the golgi apparatus membrane. The catalysed reaction is a beta-D-galactosyl-(1-&gt;4)-N-acetyl-beta-D-glucosaminyl derivative + GDP-beta-L-fucose = a beta-D-galactosyl-(1-&gt;4)-[alpha-L-fucosyl-(1-&gt;3)]-N-acetyl-beta-D-glucosaminyl derivative + GDP + H(+). The enzyme catalyses an alpha-Neu5Ac-(2-&gt;3)-beta-D-Gal-(1-&gt;4)-beta-D-GlcNAc-(1-&gt;3)-beta-D-Gal-(1-&gt;4)-beta-D-GlcNAc derivative + GDP-beta-L-fucose = an alpha-Neu5Ac-(2-&gt;3)-beta-D-Gal-(1-&gt;4)-beta-D-GlcNAc-(1-&gt;3)-beta-D-Gal-(1-&gt;4)-[alpha-L-Fuc-(1-&gt;3)]-beta-D-GlcNAc derivative + GDP + H(+). It catalyses the reaction alpha-N-glycoloylneuraminosyl-(2-&gt;3)-beta-D-galactosyl-(1-&gt;4)-N-acetyl-beta-D-glucosaminyl-(1-&gt;3)-beta-D-galactosyl-(1-&gt;4)-N-acetyl-beta-D-glucosaminyl-(1-&gt;3)-beta-D-galactosyl-(1-&gt;4)-beta-D-glucosyl-(1&lt;-&gt;1')-ceramide + GDP-beta-L-fucose = alpha-N-glycoloylneuraminosyl-(2-&gt;3)-beta-D-galactosyl-(1-&gt;4)-N-acetyl-beta-D-glucosaminyl-(1-&gt;3)-beta-D-galactosyl-(1-&gt;4)-[alpha-L-fucosyl-(1-&gt;3)]-N-acetyl-beta-D-glucosaminyl-(1-&gt;3)-beta-D-galactosyl-(1-&gt;4)-beta-D-glucosyl-(1&lt;-&gt;1')-ceramide + GDP + H(+). It carries out the reaction alpha-D-galactosyl-(1-&gt;3)-beta-D-galactosyl-(1-&gt;4)-N-acetyl-beta-D-glucosaminyl-(1-&gt;3)-beta-D-galactosyl-(1-&gt;4)-beta-D-glucosyl-(1&lt;-&gt;1')-ceramide + GDP-beta-L-fucose = a neolactoside IV(3)-alpha-Gal,III(3)-alpha-Fuc-nLc4Cer + GDP + H(+). The catalysed reaction is a neolactoside nLc4Cer + GDP-beta-L-fucose = a neolactoside III(3)-alpha-Fuc-nLc4Cer + GDP + H(+). The enzyme catalyses an N-acetyl-alpha-neuraminyl-(2-&gt;3)-beta-D-galactosyl-(1-&gt;4)-N-acetyl-beta-D-glucosaminyl derivative + GDP-beta-L-fucose = an alpha-Neu5Ac-(2-&gt;3)-beta-D-Gal-(1-&gt;4)-[alpha-L-Fuc-(1-&gt;3)]-beta-D-GlcNAc derivative + GDP + H(+). It catalyses the reaction beta-D-Gal-(1-&gt;4)-beta-D-GlcNAc-(1-&gt;3)-beta-D-Gal-(1-&gt;4)-D-Glc + GDP-beta-L-fucose = beta-D-Gal-(1-&gt;4)-[alpha-L-Fuc-(1-&gt;3)]-beta-D-GlcNAc-(1-&gt;3)-beta-D-Gal-(1-&gt;4)-D-Glc + GDP + H(+). It carries out the reaction an alpha-L-Fuc-(1-&gt;2)-beta-D-Gal-(1-&gt;4)-beta-D-GlcNAc derivative + GDP-beta-L-fucose = an alpha-L-Fuc-(1-&gt;2)-beta-D-Gal-(1-&gt;4)-[alpha-L-Fuc-(1-&gt;3)]-beta-D-GlcNAc derivative + GDP + H(+). It functions in the pathway protein modification; protein glycosylation. The protein operates within glycolipid biosynthesis. With respect to regulation, activated by Mn2+. In terms of biological role, catalyzes alpha(1-&gt;3) linkage of fucosyl moiety transferred from GDP-beta-L-fucose to N-acetyl glucosamine (GlcNAc) within type 2 lactosamine (LacNAc, beta-D-Gal-(1-&gt;4)-beta-D-GlcNAc-) glycan attached to glycolipids and N- or O-linked glycoproteins. Fucosylates distal type 2 LacNAc and its fucosylated (H-type 2 LacNAc) and sialylated (sialyl-type 2 LacNAc) derivatives to form Lewis x (Lex) (CD15) and Lewis y (Ley) antigenic epitopes involved in cell adhesion and differentiation. Generates Lex epitopes in the brain, presumably playing a role in the maintenance of neuronal stemness and neurite outgrowth in progenitor neural cells. Fucosylates the internal type 2 LacNAc unit of the polylactosamine chain to form VIM-2 antigen that serves as recognition epitope for SELE. Can also modify milk oligosaccharides in particular type 2 tetrasaccharide LNnT. This Cricetulus griseus (Chinese hamster) protein is 4-galactosyl-N-acetylglucosaminide 3-alpha-L-fucosyltransferase 9.